Consider the following 146-residue polypeptide: Putative pre-16S rRNA nuclease (146 aa).

This sequence belongs to the YqgF nuclease family.

It localises to the cytoplasm. Functionally, could be a nuclease involved in processing of the 5'-end of pre-16S rRNA. The polypeptide is Putative pre-16S rRNA nuclease (Dechloromonas aromatica (strain RCB)).